Reading from the N-terminus, the 464-residue chain is Soluble pyridine nucleotide transhydrogenase (464 aa).

35-44 serves as a coordination point for FAD; sequence DSRRQVGGNC.

The protein belongs to the class-I pyridine nucleotide-disulfide oxidoreductase family. FAD is required as a cofactor.

It is found in the cytoplasm. The catalysed reaction is NAD(+) + NADPH = NADH + NADP(+). Conversion of NADPH, generated by peripheral catabolic pathways, to NADH, which can enter the respiratory chain for energy generation. The chain is Soluble pyridine nucleotide transhydrogenase from Pseudomonas fluorescens (strain Pf0-1).